The sequence spans 274 residues: Large ribosomal subunit protein uL2 (274 aa).

2 disordered regions span residues Lys28–Ile54 and Arg221–Lys274. The span at Lys39–Ile49 shows a compositional bias: polar residues.

This sequence belongs to the universal ribosomal protein uL2 family. In terms of assembly, part of the 50S ribosomal subunit. Forms a bridge to the 30S subunit in the 70S ribosome.

In terms of biological role, one of the primary rRNA binding proteins. Required for association of the 30S and 50S subunits to form the 70S ribosome, for tRNA binding and peptide bond formation. It has been suggested to have peptidyltransferase activity; this is somewhat controversial. Makes several contacts with the 16S rRNA in the 70S ribosome. This chain is Large ribosomal subunit protein uL2, found in Edwardsiella ictaluri (strain 93-146).